Reading from the N-terminus, the 139-residue chain is Small ribosomal subunit protein uS12m (139 aa).

A mitochondrion-targeting transit peptide spans 1 to 29 (MSWSGPLRGLNTSLTCGPALVPRLWATCS). The disordered stretch occupies residues 36 to 56 (MHRLGGPPKRPPQKLGPTEGR).

Belongs to the universal ribosomal protein uS12 family. In terms of assembly, component of the mitochondrial ribosome small subunit (28S) which comprises a 12S rRNA and about 30 distinct proteins.

It localises to the mitochondrion. This Pongo abelii (Sumatran orangutan) protein is Small ribosomal subunit protein uS12m (MRPS12).